Reading from the N-terminus, the 301-residue chain is Inosose dehydratase (301 aa).

This sequence belongs to the IolE/MocC family. Requires glutathione as cofactor. Co(2+) is required as a cofactor. It depends on Mn(2+) as a cofactor.

The catalysed reaction is scyllo-inosose = 3D-3,5/4-trihydroxycyclohexane-1,2-dione + H2O. In terms of biological role, catalyzes the dehydration of inosose (2-keto-myo-inositol, 2KMI or 2,4,6/3,5-pentahydroxycyclohexanone) to 3D-(3,5/4)-trihydroxycyclohexane-1,2-dione (D-2,3-diketo-4-deoxy-epi-inositol). The sequence is that of Inosose dehydratase from Salmonella typhimurium (strain LT2 / SGSC1412 / ATCC 700720).